Consider the following 226-residue polypeptide: N-(5'-phosphoribosyl)anthranilate isomerase (226 aa).

Belongs to the TrpF family.

It catalyses the reaction N-(5-phospho-beta-D-ribosyl)anthranilate = 1-(2-carboxyphenylamino)-1-deoxy-D-ribulose 5-phosphate. It participates in amino-acid biosynthesis; L-tryptophan biosynthesis; L-tryptophan from chorismate: step 3/5. This Methanocaldococcus jannaschii (strain ATCC 43067 / DSM 2661 / JAL-1 / JCM 10045 / NBRC 100440) (Methanococcus jannaschii) protein is N-(5'-phosphoribosyl)anthranilate isomerase (trpF).